The following is an 84-amino-acid chain: Small ribosomal subunit protein uS17 (84 aa).

This sequence belongs to the universal ribosomal protein uS17 family. In terms of assembly, part of the 30S ribosomal subunit.

One of the primary rRNA binding proteins, it binds specifically to the 5'-end of 16S ribosomal RNA. In Clostridium novyi (strain NT), this protein is Small ribosomal subunit protein uS17.